The sequence spans 566 residues: Oxygen-dependent choline dehydrogenase (566 aa).

Position 7-36 (7-36 (DYIICGAGSAGNVLATRLTEDPDVTVLLLE)) interacts with FAD. The disordered stretch occupies residues 180–202 (NGYQQEGFGPMDRTVTPKGRRAS). His-474 (proton acceptor) is an active-site residue.

The protein belongs to the GMC oxidoreductase family. The cofactor is FAD.

The enzyme catalyses choline + A = betaine aldehyde + AH2. It carries out the reaction betaine aldehyde + NAD(+) + H2O = glycine betaine + NADH + 2 H(+). It participates in amine and polyamine biosynthesis; betaine biosynthesis via choline pathway; betaine aldehyde from choline (cytochrome c reductase route): step 1/1. Its function is as follows. Involved in the biosynthesis of the osmoprotectant glycine betaine. Catalyzes the oxidation of choline to betaine aldehyde and betaine aldehyde to glycine betaine at the same rate. This is Oxygen-dependent choline dehydrogenase from Burkholderia cenocepacia (strain HI2424).